Consider the following 113-residue polypeptide: Protein CTLA-2-beta (113 aa).

A run of 2 repeats spans residues 15 to 17 (EWK) and 18 to 20 (EWK). The segment at 15-20 (EWKEWK) is 2 X 3 AA tandem repeats of E-W-K.

This sequence to the propeptide regions of cysteine proteases.

Functionally, not known, expressed in activated T-cell. This chain is Protein CTLA-2-beta (Ctla2b), found in Mus musculus (Mouse).